A 306-amino-acid polypeptide reads, in one-letter code: Recombination-associated protein RdgC (306 aa).

It belongs to the RdgC family.

The protein localises to the cytoplasm. The protein resides in the nucleoid. May be involved in recombination. The chain is Recombination-associated protein RdgC from Pseudomonas aeruginosa (strain ATCC 15692 / DSM 22644 / CIP 104116 / JCM 14847 / LMG 12228 / 1C / PRS 101 / PAO1).